A 252-amino-acid chain; its full sequence is tRNA1(Val) (adenine(37)-N6)-methyltransferase (252 aa).

The protein belongs to the methyltransferase superfamily. tRNA (adenine-N(6)-)-methyltransferase family.

It localises to the cytoplasm. It catalyses the reaction adenosine(37) in tRNA1(Val) + S-adenosyl-L-methionine = N(6)-methyladenosine(37) in tRNA1(Val) + S-adenosyl-L-homocysteine + H(+). Specifically methylates the adenine in position 37 of tRNA(1)(Val) (anticodon cmo5UAC). The polypeptide is tRNA1(Val) (adenine(37)-N6)-methyltransferase (Yersinia pseudotuberculosis serotype IB (strain PB1/+)).